Reading from the N-terminus, the 300-residue chain is ETS homologous factor (300 aa).

The PNT domain occupies 29-115 (STCNVSSGFF…SNLQHLKWNG (87 aa)). The tract at residues 183-202 (ESPDMKKEQDPPAKCHTKKH) is disordered. Positions 185 to 195 (PDMKKEQDPPA) are enriched in basic and acidic residues. The segment at residues 207 to 289 (THLWEFIRDI…DGRRLVYKFG (83 aa)) is a DNA-binding region (ETS).

Belongs to the ETS family. Expressed exclusively in tissues with a high content of epithelial cells. Highly expressed in salivary gland, mammary gland, prostate, and lung. Weakly expressed in kidney and colon. Not detected in heart, brain, placenta, liver, skeletal muscle, spleen, thymus, testis, ovary, small intestine or peripheral blood leukocytes.

Its subcellular location is the nucleus. Its function is as follows. Transcriptional activator that may play a role in regulating epithelial cell differentiation and proliferation. May act as a repressor for a specific subset of ETS/AP-1-responsive genes and as a modulator of the nuclear response to mitogen-activated protein kinase signaling cascades. Binds to DNA sequences containing the consensus nucleotide core sequence GGAA. Involved in regulation of TNFRSF10B/DR5 expression through Ets-binding sequences on the TNFRSF10B/DR5 promoter. May contribute to development and carcinogenesis by acting as a tumor suppressor gene or anti-oncogene. This is ETS homologous factor from Homo sapiens (Human).